The following is a 348-amino-acid chain: Hereditary hemochromatosis protein homolog (348 aa).

The signal sequence occupies residues 1–22 (MGPRARPALFFLILLRTVAAQG). The interval 23–114 (RPPRSHSLRY…IMDNHNHSKE (92 aa)) is alpha-1. The Extracellular segment spans residues 23–306 (RPPRSHSLRY…WEPSLSNTLV (284 aa)). Residues Asn-110, Asn-130, and Asn-234 are each glycosylated (N-linked (GlcNAc...) asparagine). The interval 115–205 (SHTLQVILGC…ELGRGVLDQQ (91 aa)) is alpha-2. Intrachain disulfides connect Cys-124–Cys-187 and Cys-225–Cys-282. Residues 206 to 297 (VPPLVKVTHH…GLDQPLTATW (92 aa)) are alpha-3. An Ig-like C1-type domain is found at 207–296 (PPLVKVTHHV…PGLDQPLTAT (90 aa)). Residues 298-306 (EPSLSNTLV) form a connecting peptide region. The chain crosses the membrane as a helical span at residues 307 to 330 (TGVISGIAVCVIIFLIGILFRILR). Residues 331–348 (KRQASRGAMGDYVLAECE) are Cytoplasmic-facing.

The protein belongs to the MHC class I family. As to quaternary structure, binds TFR through the extracellular domain in a pH-dependent manner.

It localises to the cell membrane. Binds to transferrin receptor (TFR) and reduces its affinity for iron-loaded transferrin. In Rhinoceros unicornis (Greater Indian rhinoceros), this protein is Hereditary hemochromatosis protein homolog (HFE).